A 398-amino-acid polypeptide reads, in one-letter code: Circumsporozoite protein (398 aa).

Residues 1–23 (MKNFNLLAVSSILLVDLFRTQWG) form the signal peptide. The interval 50–110 (AQVRQSASRG…AAAGEAGNNA (61 aa)) is disordered. Over residues 66 to 93 (PKNEEGADKPKKKDEKQVEPKKPRENKL) the composition is skewed to basic and acidic residues. A required for the binding to heparan sulfate proteoglycans (HSPGs) on the surface of host hepatocytes region spans residues 81–89 (KQVEPKKPR). The interval 92–96 (KLKQP) is region I; contains the proteolytic cleavage site. Tandem repeats lie at residues 97–105 (AGNNAAAGE), 106–114 (AGNNAAAGE), 115–123 (AGNNAAAGE), 124–132 (AGNNAAAGE), 133–141 (AGNNAAAGE), 142–150 (AGNNAAAGE), 151–159 (AGNNAAGGA), 160–168 (AGNNAAGGE), 169–177 (AGNNAAGGA), 178–186 (AGNNAAAGE), 187–195 (AGNNAAGGE), 196–204 (AGNNAAAGE), 205–213 (AGNNAAGGA), 214–222 (AGNNAAAGE), 223–231 (AGNNAAAGA), 232–240 (AGNNAAAGA), 241–257 (AGNNAAAGEAGAGGAGR), 258–274 (AGNNAAAGEAGAGGAGR), and 275–291 (AGNNAAAGEAGAGGAGG). Positions 97–110 (AGNNAAAGEAGNNA) are enriched in low complexity. The tract at residues 97–240 (AGNNAAAGEA…AAGNNAAAGA (144 aa)) is 16 X 9 AA tandem repeats of A-G-N-N-A-A-[AG]-G-[EA]. The segment at 241–291 (AGNNAAAGEAGAGGAGRAGNNAAAGEAGAGGAGRAGNNAAAGEAGAGGAGG) is 3 X 17 AA tandem repeats of A-G-N-N-A-A-A-G-E-A-G-A-G-G-A-G-[RG]. A disordered region spans residues 248–310 (GEAGAGGAGR…AGQGQNNGGA (63 aa)). Gly residues predominate over residues 284-293 (AGAGGAGGNA). Residues 324–376 (KIRSTIGVEWSPCSVTCGKGVRMRRKVNAANKKPEELDANDLETEVCTMDKCA) form the TSP type-1 domain. 2 cysteine pairs are disulfide-bonded: C336–C370 and C340–C375. O-linked (Fuc) threonine glycosylation occurs at T339. C375 carries GPI-anchor amidated cysteine lipidation. Positions 376–398 (AGIFNVVSNSLGLVILLVLALFN) are cleaved as a propeptide — removed in mature form.

It belongs to the plasmodium circumsporozoite protein family. During host cell invasion, proteolytically cleaved at the cell membrane in the region I by a papain-like cysteine protease of parasite origin. Cleavage is triggered by the sporozoite contact with highly sulfated heparan sulfate proteoglycans (HSPGs) present on the host hepatocyte cell surface. Cleavage exposes the TSP type-1 (TSR) domain and is required for productive invasion of host hepatocytes but not for adhesion to the host cell membrane. Cleavage is dispensable for sporozoite development in the oocyst, motility and for traversal of host and vector cells. In terms of processing, O-glycosylated; maybe by POFUT2.

Its subcellular location is the cell membrane. It is found in the cytoplasm. Its function is as follows. Essential sporozoite protein. In the mosquito vector, required for sporozoite development in the oocyst, migration through the vector hemolymph and entry into the vector salivary glands. In the vertebrate host, required for sporozoite migration through the host dermis and infection of host hepatocytes. Binds to highly sulfated heparan sulfate proteoglycans (HSPGs) on the surface of host hepatocytes. Functionally, in the vertebrate host, binds to highly sulfated heparan sulfate proteoglycans (HSPGs) on the surface of host hepatocytes and is required for sporozoite invasion of the host hepatocytes. The chain is Circumsporozoite protein from Plasmodium cynomolgi (strain Ceylon).